A 640-amino-acid chain; its full sequence is SH3 domain-containing protein 21 (640 aa).

Positions 1–60 (MVQSELQLQPRAGGRAEAASWGDRGNDKGGLGNPDMPSVSPGPQRPPKLSSLAYDSPPDY) are disordered. The 62-residue stretch at 65-126 (SHPEVYRVLF…PDNFVLPPPP (62 aa)) folds into the SH3 domain. Disordered stretches follow at residues 133–361 (RKVV…PLGD), 401–551 (YFVA…PDSQ), and 618–640 (VQVMQGTQKSQTPRVIHTQTQTY). A compositionally biased stretch (basic and acidic residues) spans 177-186 (PSRDSQKLTS). Residues 210 to 220 (TQTPQQRSVSS) show a composition bias toward polar residues. Basic and acidic residues-rich tracts occupy residues 401-416 (YFVAKEDPSSQEEAHT), 459-469 (ALEKPHPHEEA), and 494-532 (RPLREEVLPKEGVASKEEVTLKEELPPKEEVAPKEEVPP). Positions 572–626 (VDVTSLRGEVESLRRALELMEVQLERKLTDIWEELKSEKEQRRRLEVQVMQGTQK) form a coiled coil. The span at 621-640 (MQGTQKSQTPRVIHTQTQTY) shows a compositional bias: polar residues.

In Homo sapiens (Human), this protein is SH3 domain-containing protein 21 (SH3D21).